The following is a 144-amino-acid chain: Large ribosomal subunit protein uL15 (144 aa).

The disordered stretch occupies residues 1–58 (MNLSNLRAPRKANEKKKRVGRGMGSGMGKTSARGHKGQRSRSGSRMMRGFEGGQMPLH). Residues 8–20 (APRKANEKKKRVG) are compositionally biased toward basic residues. Residues 40–49 (SRSGSRMMRG) are compositionally biased toward low complexity.

This sequence belongs to the universal ribosomal protein uL15 family. As to quaternary structure, part of the 50S ribosomal subunit.

Its function is as follows. Binds to the 23S rRNA. The sequence is that of Large ribosomal subunit protein uL15 from Koribacter versatilis (strain Ellin345).